Here is a 307-residue protein sequence, read N- to C-terminus: MVNTHVNLPGLDLKNPVMPASGTFGFGDVPAAQKFDLNDLGAMVIKTTTPHATTGNPQPQIAILEDGVLNSVGLTNPGVDQVISEKLTKLRHQYLDLPIMASVGGDSEDDYVEVAKKLSASGLVNALEINVSCPNVAQGGMSFGVHAGVVEELTKKIKMAVALPIYVKLTPNVTDIVEIAKAAESGGADGISMINTVLGMRIDVKTRKPLLGHNMGGLSGEAVKPIAIRMISQVRQVTQLPIIGMGGISTAQDVIEFILAGANAVAVGSAHFEDELAAKHIAENLPAELEKLGIEDINDLVGQVKFN.

FMN contacts are provided by residues Ser-21 and 46–47 (KT). Residues Lys-46, 70 to 74 (NSVGL), and Asn-130 contribute to the substrate site. Asn-130 serves as a coordination point for FMN. The active-site Nucleophile is the Cys-133. Residues Lys-168 and Ile-194 each contribute to the FMN site. Position 195 to 196 (195 to 196 (NT)) interacts with substrate. FMN contacts are provided by residues Gly-220, 246-247 (GG), and 268-269 (GS).

Belongs to the dihydroorotate dehydrogenase family. Type 1 subfamily. In terms of assembly, homodimer. Requires FMN as cofactor.

The protein resides in the cytoplasm. The enzyme catalyses (S)-dihydroorotate + fumarate = orotate + succinate. Its pathway is pyrimidine metabolism; UMP biosynthesis via de novo pathway. In terms of biological role, catalyzes the conversion of dihydroorotate to orotate with fumarate as the electron acceptor. This Lactobacillus delbrueckii subsp. bulgaricus (strain ATCC 11842 / DSM 20081 / BCRC 10696 / JCM 1002 / NBRC 13953 / NCIMB 11778 / NCTC 12712 / WDCM 00102 / Lb 14) protein is Dihydroorotate dehydrogenase A (fumarate) (pyrD).